The primary structure comprises 856 residues: DNA mismatch repair protein MutS (856 aa).

607-614 contributes to the ATP binding site; that stretch reads GPNMSGKS.

The protein belongs to the DNA mismatch repair MutS family.

Functionally, this protein is involved in the repair of mismatches in DNA. It is possible that it carries out the mismatch recognition step. This protein has a weak ATPase activity. The sequence is that of DNA mismatch repair protein MutS from Lactobacillus delbrueckii subsp. bulgaricus (strain ATCC 11842 / DSM 20081 / BCRC 10696 / JCM 1002 / NBRC 13953 / NCIMB 11778 / NCTC 12712 / WDCM 00102 / Lb 14).